We begin with the raw amino-acid sequence, 582 residues long: MKRSMYAGRVREEHIGTTITLKGWVSRRRDLGGLIFIDLRDREGVMQLVINPEEVSSDVMATAERLRSEYVIEVEGFVEARQQANDKLATGMVELKVSALTILNTAKTTPFEIKDDVEVSDDTRLRYRYLDLRRPEMLENFKLRAKVTHSIRNYLDDLEFIDVETPMLTKSTPEGARDYLVPSRVSQGHFYALPQSPQITKQLLMNAGFDRYYQIVKCFRDEDLRGDRQPEFTQVDLETSFLSEQEIQDIVEGMIAKVMKETKEIDVTLPFPRMSYDVAMNSYGSDKPDTRFEMLLQDLTVTVKGIDFKVFSEAPAVKAIVVKGNADRYSRKDIDKLTEFAKQFGAKGLAWVKVTDGQLAGPVAKFLTAIETELSSQLKLAENDLVLFVADTLEVANNTLGALRNRIARDLDMIDQSQFNFLWVVDWPMFEWSEEEGRYMSAHHPFTLPTPESAHELEGDLAKVRAIAYDIVLNGYELGGGSLRINQKEMQERMFKALGFTADEANDQFGFLLEAMDYGFPPHGGLAIGLDRFVMLLAEEDNIREVIAFPKNNKASDPMTQAPSLVSENQLEELSLQIESHD.

E174 contributes to the L-aspartate binding site. The aspartate stretch occupies residues 198–201; that stretch reads QITK. R220 serves as a coordination point for L-aspartate. ATP contacts are provided by residues 220 to 222 and Q229; that span reads RDE. An L-aspartate-binding site is contributed by H443. E477 provides a ligand contact to ATP. An L-aspartate-binding site is contributed by R484. 529–532 provides a ligand contact to ATP; that stretch reads GLDR.

The protein belongs to the class-II aminoacyl-tRNA synthetase family. Type 1 subfamily. As to quaternary structure, homodimer.

The protein resides in the cytoplasm. The catalysed reaction is tRNA(Asp) + L-aspartate + ATP = L-aspartyl-tRNA(Asp) + AMP + diphosphate. Its function is as follows. Catalyzes the attachment of L-aspartate to tRNA(Asp) in a two-step reaction: L-aspartate is first activated by ATP to form Asp-AMP and then transferred to the acceptor end of tRNA(Asp). The chain is Aspartate--tRNA ligase from Streptococcus pyogenes serotype M6 (strain ATCC BAA-946 / MGAS10394).